Here is a 231-residue protein sequence, read N- to C-terminus: Ribonuclease P protein component 3 (231 aa).

Belongs to the eukaryotic/archaeal RNase P protein component 3 family. In terms of assembly, consists of a catalytic RNA component and at least 4-5 protein subunits.

It localises to the cytoplasm. The enzyme catalyses Endonucleolytic cleavage of RNA, removing 5'-extranucleotides from tRNA precursor.. In terms of biological role, part of ribonuclease P, a protein complex that generates mature tRNA molecules by cleaving their 5'-ends. This Methanococcus vannielii (strain ATCC 35089 / DSM 1224 / JCM 13029 / OCM 148 / SB) protein is Ribonuclease P protein component 3.